Here is a 435-residue protein sequence, read N- to C-terminus: MKYFNTIVNWNMLNSNEQKNILLRPVIKNNNSIKKKVKKIIENIQVLGEKALREYTILFEKCHINKFEVSKEKMLSSSLYVNQSLKDAISTAKKNITSFHTAQILSPIDIETQVGVRCQQIYLPLNSVGIYIPSGIAPLFSTVLMLAIPAKIAGCKQIILCSPPPIDNTILYAANICGVDKIFQMGGAQAIAALAFGTKNIPKVDKIFGPGNAYVTEAKLQVSSIFNGPQIDMLAGPSELLIIADEASNADFIAADLLSQAEHSISSQVILLTPSLQLAKKVIISINNQLKNLSKSDDISTALDNSVIILTKDLFECIKISNIYAPEHLIIQTKEPRLILKEILNASSIFLGPWSPESAGDYASGTNHVLPTYGKSVSSSALGLCDFKKRVLIQELTSQGFINLSNTLKILSEAEKLEAHKNAVKIRVDFLKEKI.

Positions 131, 189, and 212 each coordinate NAD(+). Substrate-binding residues include Ser-238, Gln-260, and His-263. Gln-260 and His-263 together coordinate Zn(2+). Active-site proton acceptor residues include Glu-327 and His-328. 4 residues coordinate substrate: His-328, Asp-361, Glu-415, and His-420. Asp-361 contacts Zn(2+). His-420 lines the Zn(2+) pocket.

Belongs to the histidinol dehydrogenase family. In terms of assembly, homodimer. Zn(2+) is required as a cofactor.

The catalysed reaction is L-histidinol + 2 NAD(+) + H2O = L-histidine + 2 NADH + 3 H(+). It participates in amino-acid biosynthesis; L-histidine biosynthesis; L-histidine from 5-phospho-alpha-D-ribose 1-diphosphate: step 9/9. Functionally, catalyzes the sequential NAD-dependent oxidations of L-histidinol to L-histidinaldehyde and then to L-histidine. The protein is Histidinol dehydrogenase (hisD) of Buchnera aphidicola subsp. Schizaphis graminum (strain Sg).